A 571-amino-acid chain; its full sequence is Adenine deaminase (571 aa).

The protein belongs to the metallo-dependent hydrolases superfamily. Adenine deaminase family. Mn(2+) is required as a cofactor.

It carries out the reaction adenine + H2O + H(+) = hypoxanthine + NH4(+). The sequence is that of Adenine deaminase from Dehalococcoides mccartyi (strain CBDB1).